Here is a 352-residue protein sequence, read N- to C-terminus: UDP-N-acetylglucosamine--N-acetylmuramyl-(pentapeptide) pyrophosphoryl-undecaprenol N-acetylglucosamine transferase (352 aa).

Residues 12–14 (TGG), Asn124, Arg160, Ser188, and Gln287 contribute to the UDP-N-acetyl-alpha-D-glucosamine site.

Belongs to the glycosyltransferase 28 family. MurG subfamily.

The protein localises to the cell inner membrane. It carries out the reaction di-trans,octa-cis-undecaprenyl diphospho-N-acetyl-alpha-D-muramoyl-L-alanyl-D-glutamyl-meso-2,6-diaminopimeloyl-D-alanyl-D-alanine + UDP-N-acetyl-alpha-D-glucosamine = di-trans,octa-cis-undecaprenyl diphospho-[N-acetyl-alpha-D-glucosaminyl-(1-&gt;4)]-N-acetyl-alpha-D-muramoyl-L-alanyl-D-glutamyl-meso-2,6-diaminopimeloyl-D-alanyl-D-alanine + UDP + H(+). It functions in the pathway cell wall biogenesis; peptidoglycan biosynthesis. Cell wall formation. Catalyzes the transfer of a GlcNAc subunit on undecaprenyl-pyrophosphoryl-MurNAc-pentapeptide (lipid intermediate I) to form undecaprenyl-pyrophosphoryl-MurNAc-(pentapeptide)GlcNAc (lipid intermediate II). This is UDP-N-acetylglucosamine--N-acetylmuramyl-(pentapeptide) pyrophosphoryl-undecaprenol N-acetylglucosamine transferase from Dechloromonas aromatica (strain RCB).